A 157-amino-acid polypeptide reads, in one-letter code: uncharacterized protein (157 aa).

This is an uncharacterized protein from Schizosaccharomyces pombe (strain 972 / ATCC 24843) (Fission yeast).